The primary structure comprises 90 residues: uncharacterized protein (90 aa).

A signal peptide spans 1 to 18 (MKTLPVLVLSLTLLTVFS). Positions 28–50 (QAKQLLRSRRQDRPSKPGFPDEP) are disordered.

Its subcellular location is the secreted. This is an uncharacterized protein from Homo sapiens (Human).